We begin with the raw amino-acid sequence, 350 residues long: Histidinol-phosphate aminotransferase (350 aa).

Lys207 is modified (N6-(pyridoxal phosphate)lysine).

The protein belongs to the class-II pyridoxal-phosphate-dependent aminotransferase family. Histidinol-phosphate aminotransferase subfamily. Homodimer. Pyridoxal 5'-phosphate serves as cofactor.

The enzyme catalyses L-histidinol phosphate + 2-oxoglutarate = 3-(imidazol-4-yl)-2-oxopropyl phosphate + L-glutamate. Its pathway is amino-acid biosynthesis; L-histidine biosynthesis; L-histidine from 5-phospho-alpha-D-ribose 1-diphosphate: step 7/9. The sequence is that of Histidinol-phosphate aminotransferase from Streptococcus thermophilus (strain ATCC BAA-491 / LMD-9).